Here is an 885-residue protein sequence, read N- to C-terminus: Protein arg11, mitochondrial (885 aa).

Residues 1-59 (MLIELQQIVKSGLVRNGAKHCTKRSLLCSNASVIASKRFQGSFAPGQQQPLNPLAKPIE) constitute a mitochondrion transit peptide. One can recognise an N-acetyltransferase domain in the interval 346 to 499 (FVINKHDSLD…SDKPFADAII (154 aa)). Over residues 503 to 523 (STKPPTASSTTNNPSSSQINQ) the composition is skewed to low complexity. A disordered region spans residues 503-532 (STKPPTASSTTNNPSSSQINQKRSYSTSSL). Cys703 is an active-site residue.

It in the N-terminal section; belongs to the acetylglutamate kinase family. In the C-terminal section; belongs to the NAGSA dehydrogenase family. The protein precursor is probably cleaved into the two biologically active enzymes, the kinase and the reductase.

The protein resides in the mitochondrion. The enzyme catalyses N-acetyl-L-glutamate 5-semialdehyde + phosphate + NADP(+) = N-acetyl-L-glutamyl 5-phosphate + NADPH + H(+). It carries out the reaction N-acetyl-L-glutamate + ATP = N-acetyl-L-glutamyl 5-phosphate + ADP. The protein operates within amino-acid biosynthesis; L-arginine biosynthesis; N(2)-acetyl-L-ornithine from L-glutamate: step 2/4. Its pathway is amino-acid biosynthesis; L-arginine biosynthesis; N(2)-acetyl-L-ornithine from L-glutamate: step 3/4. With respect to regulation, the kinase activity is inhibited by arginine. The protein is Protein arg11, mitochondrial (arg11) of Schizosaccharomyces pombe (strain 972 / ATCC 24843) (Fission yeast).